The primary structure comprises 338 residues: Ferrochelatase (338 aa).

The Fe cation site is built by His202 and Glu283.

It belongs to the ferrochelatase family.

Its subcellular location is the cytoplasm. The catalysed reaction is heme b + 2 H(+) = protoporphyrin IX + Fe(2+). Its pathway is porphyrin-containing compound metabolism; protoheme biosynthesis; protoheme from protoporphyrin-IX: step 1/1. Catalyzes the ferrous insertion into protoporphyrin IX. The polypeptide is Ferrochelatase (Acinetobacter baumannii (strain AB307-0294)).